Consider the following 157-residue polypeptide: MAALVLLRAGLARPRGVPTALLRGTLLRHSAVLTAAADRSAPARQSHGGAPQGHGSSKAASLHWTSERAVSALLLGLLPAAYLYPGPAVDYSLAAALTLHGHWGLGQVITDYVHGDTPIKVANTGLYVLSAITFTGLCYFNYYDVGICKAVAMLWSI.

The N-terminal 45 residues, methionine 1–glutamine 45, are a transit peptide targeting the mitochondrion. The Mitochondrial matrix segment spans residues serine 46 to serine 61. The helical transmembrane segment at leucine 62 to leucine 83 threads the bilayer. The Mitochondrial intermembrane portion of the chain corresponds to tyrosine 84 to alanine 88. Residues valine 89 to isoleucine 109 traverse the membrane as a helical segment. Histidine 100 provides a ligand contact to heme b. Over threonine 110–proline 118 the chain is Mitochondrial matrix. Tyrosine 112 is an a ubiquinone binding site. Residues isoleucine 119 to phenylalanine 140 traverse the membrane as a helical segment. The Mitochondrial intermembrane portion of the chain corresponds to asparagine 141–isoleucine 157.

Belongs to the CybS family. In terms of assembly, component of complex II composed of four subunits: the flavoprotein (FP) SDHA, iron-sulfur protein (IP) SDHB, and a cytochrome b560 composed of SDHC and SDHD.

It is found in the mitochondrion inner membrane. It participates in carbohydrate metabolism; tricarboxylic acid cycle. Membrane-anchoring subunit of succinate dehydrogenase (SDH) that is involved in complex II of the mitochondrial electron transport chain and is responsible for transferring electrons from succinate to ubiquinone (coenzyme Q). SDH also oxidizes malate to the non-canonical enol form of oxaloacetate, enol-oxaloacetate. Enol-oxaloacetate, which is a potent inhibitor of the succinate dehydrogenase activity, is further isomerized into keto-oxaloacetate. The polypeptide is Succinate dehydrogenase [ubiquinone] cytochrome b small subunit, mitochondrial (SDHD) (Gallus gallus (Chicken)).